A 142-amino-acid polypeptide reads, in one-letter code: Small ribosomal subunit protein uS9 (142 aa).

This sequence belongs to the universal ribosomal protein uS9 family. As to quaternary structure, component of the small ribosomal subunit. Mature ribosomes consist of a small (40S) and a large (60S) subunit. The 40S subunit contains about 32 different proteins and 1 molecule of RNA (18S). The 60S subunit contains 45 different proteins and 3 molecules of RNA (25S, 5.8S and 5S).

The protein localises to the cytoplasm. Its function is as follows. Component of the ribosome, a large ribonucleoprotein complex responsible for the synthesis of proteins in the cell. The small ribosomal subunit (SSU) binds messenger RNAs (mRNAs) and translates the encoded message by selecting cognate aminoacyl-transfer RNA (tRNA) molecules. The large subunit (LSU) contains the ribosomal catalytic site termed the peptidyl transferase center (PTC), which catalyzes the formation of peptide bonds, thereby polymerizing the amino acids delivered by tRNAs into a polypeptide chain. The nascent polypeptides leave the ribosome through a tunnel in the LSU and interact with protein factors that function in enzymatic processing, targeting, and the membrane insertion of nascent chains at the exit of the ribosomal tunnel. This Candida albicans (strain SC5314 / ATCC MYA-2876) (Yeast) protein is Small ribosomal subunit protein uS9 (RPS16A).